The chain runs to 229 residues: Potassium/proton antiporter CemA (229 aa).

3 helical membrane-spanning segments follow: residues 6–26 (AFIP…ISLC), 107–127 (ILHF…SFWG), and 189–209 (ILSG…KYWI).

It belongs to the CemA family.

It localises to the plastid. The protein localises to the chloroplast inner membrane. It carries out the reaction K(+)(in) + H(+)(out) = K(+)(out) + H(+)(in). In terms of biological role, contributes to K(+)/H(+) antiport activity by supporting proton efflux to control proton extrusion and homeostasis in chloroplasts in a light-dependent manner to modulate photosynthesis. Prevents excessive induction of non-photochemical quenching (NPQ) under continuous-light conditions. Indirectly promotes efficient inorganic carbon uptake into chloroplasts. The polypeptide is Potassium/proton antiporter CemA (Draba nemorosa (Woodland whitlowgrass)).